Reading from the N-terminus, the 385-residue chain is 8-amino-7-oxononanoate synthase (385 aa).

Arginine 21 is a binding site for substrate. 108–109 (GF) contributes to the pyridoxal 5'-phosphate binding site. Histidine 133 contributes to the substrate binding site. Pyridoxal 5'-phosphate-binding residues include serine 179, histidine 207, and threonine 233. Lysine 236 carries the post-translational modification N6-(pyridoxal phosphate)lysine. Threonine 352 provides a ligand contact to substrate.

The protein belongs to the class-II pyridoxal-phosphate-dependent aminotransferase family. BioF subfamily. In terms of assembly, homodimer. Requires pyridoxal 5'-phosphate as cofactor.

The enzyme catalyses 6-carboxyhexanoyl-[ACP] + L-alanine + H(+) = (8S)-8-amino-7-oxononanoate + holo-[ACP] + CO2. It participates in cofactor biosynthesis; biotin biosynthesis. Functionally, catalyzes the decarboxylative condensation of pimeloyl-[acyl-carrier protein] and L-alanine to produce 8-amino-7-oxononanoate (AON), [acyl-carrier protein], and carbon dioxide. The protein is 8-amino-7-oxononanoate synthase of Salmonella paratyphi C (strain RKS4594).